The primary structure comprises 699 residues: Polyribonucleotide nucleotidyltransferase (699 aa).

Residues aspartate 485 and aspartate 491 each contribute to the Mg(2+) site. A KH domain is found at proline 552–isoleucine 611. Residues glycine 621–lysine 689 form the S1 motif domain.

It belongs to the polyribonucleotide nucleotidyltransferase family. As to quaternary structure, component of the RNA degradosome, which is a multiprotein complex involved in RNA processing and mRNA degradation. Mg(2+) is required as a cofactor.

It localises to the cytoplasm. The enzyme catalyses RNA(n+1) + phosphate = RNA(n) + a ribonucleoside 5'-diphosphate. Functionally, involved in mRNA degradation. Catalyzes the phosphorolysis of single-stranded polyribonucleotides processively in the 3'- to 5'-direction. This is Polyribonucleotide nucleotidyltransferase from Shewanella oneidensis (strain ATCC 700550 / JCM 31522 / CIP 106686 / LMG 19005 / NCIMB 14063 / MR-1).